We begin with the raw amino-acid sequence, 122 residues long: Large ribosomal subunit protein bL17 (122 aa).

This sequence belongs to the bacterial ribosomal protein bL17 family. In terms of assembly, part of the 50S ribosomal subunit. Contacts protein L32.

In Staphylococcus epidermidis (strain ATCC 35984 / DSM 28319 / BCRC 17069 / CCUG 31568 / BM 3577 / RP62A), this protein is Large ribosomal subunit protein bL17.